The sequence spans 75 residues: UPF0291 protein lmo1304 (75 aa).

The disordered stretch occupies residues 56 to 75 (DPNGKDVTPHKVKQLRKNKY). The segment covering 65–75 (HKVKQLRKNKY) has biased composition (basic residues).

The protein belongs to the UPF0291 family.

It is found in the cytoplasm. This chain is UPF0291 protein lmo1304, found in Listeria monocytogenes serovar 1/2a (strain ATCC BAA-679 / EGD-e).